The following is a 488-amino-acid chain: Acetyl-coenzyme A carboxylase carboxyl transferase subunit beta, chloroplastic (488 aa).

The 268-residue stretch at 221 to 488 (LWIQCDNCYA…FFPLNKNEIK (268 aa)) folds into the CoA carboxyltransferase N-terminal domain. Zn(2+) is bound by residues cysteine 225, cysteine 228, cysteine 244, and cysteine 247. The C4-type zinc-finger motif lies at 225–247 (CDNCYALIYKKALKLKLNVCEQC).

The protein belongs to the AccD/PCCB family. As to quaternary structure, acetyl-CoA carboxylase is a heterohexamer composed of biotin carboxyl carrier protein, biotin carboxylase and 2 subunits each of ACCase subunit alpha and ACCase plastid-coded subunit beta (accD). Requires Zn(2+) as cofactor.

It is found in the plastid. It localises to the chloroplast stroma. The enzyme catalyses N(6)-carboxybiotinyl-L-lysyl-[protein] + acetyl-CoA = N(6)-biotinyl-L-lysyl-[protein] + malonyl-CoA. The protein operates within lipid metabolism; malonyl-CoA biosynthesis; malonyl-CoA from acetyl-CoA: step 1/1. Functionally, component of the acetyl coenzyme A carboxylase (ACC) complex. Biotin carboxylase (BC) catalyzes the carboxylation of biotin on its carrier protein (BCCP) and then the CO(2) group is transferred by the transcarboxylase to acetyl-CoA to form malonyl-CoA. The chain is Acetyl-coenzyme A carboxylase carboxyl transferase subunit beta, chloroplastic from Aethionema grandiflorum (Persian stone-cress).